The following is a 128-amino-acid chain: MYEAEDHEFFDVLYQQWSHTTEAKSRYWVVEFDGDEHLQWQVFAVDQTDGSKLWLGSFHREQDADFVAGLHGALPDLIRRLHDATDEAVRKDEANDIAQGQLAEALLENQGLKAQILELERQLDKETS.

The sequence is that of Gene 39 protein (39) from Mycobacterium (Mycobacteriophage D29).